The primary structure comprises 297 residues: Thiosulfate sulfurtransferase (297 aa).

The residue at position 14 (Lys14) is an N6-acetyllysine; alternate. Lys14 carries the post-translational modification N6-succinyllysine; alternate. Residues 25–143 form the Rhodanese 1 domain; sequence VGPGLRVLDA…WLKEGHPVTS (119 aa). Ser35 is a glycosylation site (O-linked (GlcNAc) serine). Ser38 bears the Phosphoserine mark. Lys136 carries the post-translational modification N6-acetyllysine; alternate. The residue at position 136 (Lys136) is an N6-succinyllysine; alternate. The tract at residues 144-159 is hinge; it reads EPSRPEPAIFKATLNR. Position 163 is an N6-acetyllysine (Lys163). In terms of domain architecture, Rhodanese 2 spans 173–288; the sequence is ESKRFQLVDS…WFHRAPPETW (116 aa). Residue Lys175 is modified to N6-acetyllysine; alternate. Lys175 carries the post-translational modification N6-succinyllysine; alternate. Substrate is bound at residue Arg187. Lys224 is modified (N6-acetyllysine; alternate). Position 224 is an N6-succinyllysine; alternate (Lys224). N6-acetyllysine is present on Lys236. Lys237 is modified (N6-acetyllysine; alternate). N6-succinyllysine; alternate is present on Lys237. Catalysis depends on Cys248, which acts as the Cysteine persulfide intermediate. Residue Lys250 coordinates substrate.

In terms of assembly, monomer. Expressed in numerous tissues.

The protein resides in the mitochondrion matrix. The enzyme catalyses thiosulfate + hydrogen cyanide = thiocyanate + sulfite + 2 H(+). Functionally, together with MRPL18, acts as a mitochondrial import factor for the cytosolic 5S rRNA. Only the nascent unfolded cytoplasmic form is able to bind to the 5S rRNA. Formation of iron-sulfur complexes and cyanide detoxification. Binds molecular oxygen and sulfur. The protein is Thiosulfate sulfurtransferase (TST) of Bos taurus (Bovine).